The following is a 537-amino-acid chain: Phosphoenolpyruvate carboxykinase (ATP) (537 aa).

Residues Arg61, Tyr195, and Lys201 each coordinate substrate. Residues Lys201, His220, and 236 to 244 contribute to the ATP site; that span reads GLSGTGKTT. Mn(2+) is bound by residues Lys201 and His220. Residue Asp257 coordinates Mn(2+). ATP contacts are provided by Glu285, Arg323, and Thr448. Arg323 is a binding site for substrate.

This sequence belongs to the phosphoenolpyruvate carboxykinase (ATP) family. Mn(2+) is required as a cofactor.

The protein localises to the cytoplasm. It catalyses the reaction oxaloacetate + ATP = phosphoenolpyruvate + ADP + CO2. The protein operates within carbohydrate biosynthesis; gluconeogenesis. Functionally, involved in the gluconeogenesis. Catalyzes the conversion of oxaloacetate (OAA) to phosphoenolpyruvate (PEP) through direct phosphoryl transfer between the nucleoside triphosphate and OAA. This is Phosphoenolpyruvate carboxykinase (ATP) from Azorhizobium caulinodans (strain ATCC 43989 / DSM 5975 / JCM 20966 / LMG 6465 / NBRC 14845 / NCIMB 13405 / ORS 571).